Consider the following 509-residue polypeptide: MRHDTDPRPSTADLIDAVLDAPPPRPEVSEVGRVAELGDGIAIVTGLARALADEVLDFASGVSGIVFDLEPGRLGVVLLGPSQNVAMGEDVRRTGRVVSVPVGPATLGRVVDALGRPRDERDPVTDSPLAPVEAEAPDILSRTPVSRPLATGLKAVDAAVPVGLGQRQLIIGDRQTGKTSIAVDTILNQKDTGVICIYCAIGQRGDAVAKVIGALQGGEMLGQTVVIAAGDEDAPGLAYIAPYAAMSVAESFAAQGRDVLVVLDDLTHHARTYRELSLLLRRPPGREAFPGDIFYVHARLLERAGQFGEGAGSITALPVVETQAENLSAYIPTNLISITDGQIYLSPKLVRTNQFPAVDLGVSVSRVGGKAQARAFRAVGGNLRVTLSQFEELEEFARFGTRLDEDTRARLARGGAVRNALRQAERDPMAAHEQLAVLVAAMEGLLDGMDEAAAGAAMQAIRAAIRAADGGLPEIIAGDEKLTEDARGHILATARAALAQTGRGDGADA.

Position 172-179 (172-179 (GDRQTGKT)) interacts with ATP.

The protein belongs to the ATPase alpha/beta chains family. F-type ATPases have 2 components, CF(1) - the catalytic core - and CF(0) - the membrane proton channel. CF(1) has five subunits: alpha(3), beta(3), gamma(1), delta(1), epsilon(1). CF(0) has four main subunits: a(1), b(1), b'(1) and c(9-12).

It localises to the cell inner membrane. It carries out the reaction ATP + H2O + 4 H(+)(in) = ADP + phosphate + 5 H(+)(out). In terms of biological role, produces ATP from ADP in the presence of a proton gradient across the membrane. The alpha chain is a regulatory subunit. This chain is ATP synthase subunit alpha 1, found in Dinoroseobacter shibae (strain DSM 16493 / NCIMB 14021 / DFL 12).